The primary structure comprises 485 residues: Glutamyl-tRNA(Gln) amidotransferase subunit A (485 aa).

Residues K79 and S154 each act as charge relay system in the active site. S178 acts as the Acyl-ester intermediate in catalysis.

The protein belongs to the amidase family. GatA subfamily. Heterotrimer of A, B and C subunits.

The enzyme catalyses L-glutamyl-tRNA(Gln) + L-glutamine + ATP + H2O = L-glutaminyl-tRNA(Gln) + L-glutamate + ADP + phosphate + H(+). Its function is as follows. Allows the formation of correctly charged Gln-tRNA(Gln) through the transamidation of misacylated Glu-tRNA(Gln) in organisms which lack glutaminyl-tRNA synthetase. The reaction takes place in the presence of glutamine and ATP through an activated gamma-phospho-Glu-tRNA(Gln). This is Glutamyl-tRNA(Gln) amidotransferase subunit A from Desulforamulus reducens (strain ATCC BAA-1160 / DSM 100696 / MI-1) (Desulfotomaculum reducens).